Reading from the N-terminus, the 452-residue chain is 2-succinylbenzoate--CoA ligase (452 aa).

It belongs to the ATP-dependent AMP-binding enzyme family. MenE subfamily.

It carries out the reaction 2-succinylbenzoate + ATP + CoA = 2-succinylbenzoyl-CoA + AMP + diphosphate. It participates in quinol/quinone metabolism; 1,4-dihydroxy-2-naphthoate biosynthesis; 1,4-dihydroxy-2-naphthoate from chorismate: step 5/7. Its pathway is quinol/quinone metabolism; menaquinone biosynthesis. Functionally, converts 2-succinylbenzoate (OSB) to 2-succinylbenzoyl-CoA (OSB-CoA). In Haemophilus influenzae (strain ATCC 51907 / DSM 11121 / KW20 / Rd), this protein is 2-succinylbenzoate--CoA ligase.